The primary structure comprises 484 residues: Glutamyl-tRNA(Gln) amidotransferase subunit A (484 aa).

Residues Lys-76 and Ser-151 each act as charge relay system in the active site. Ser-175 serves as the catalytic Acyl-ester intermediate.

It belongs to the amidase family. GatA subfamily. In terms of assembly, heterotrimer of A, B and C subunits.

It catalyses the reaction L-glutamyl-tRNA(Gln) + L-glutamine + ATP + H2O = L-glutaminyl-tRNA(Gln) + L-glutamate + ADP + phosphate + H(+). Its function is as follows. Allows the formation of correctly charged Gln-tRNA(Gln) through the transamidation of misacylated Glu-tRNA(Gln) in organisms which lack glutaminyl-tRNA synthetase. The reaction takes place in the presence of glutamine and ATP through an activated gamma-phospho-Glu-tRNA(Gln). This Thioalkalivibrio sulfidiphilus (strain HL-EbGR7) protein is Glutamyl-tRNA(Gln) amidotransferase subunit A.